Consider the following 112-residue polypeptide: Nitrogen regulatory protein P-II (112 aa).

Tyr-51 carries the O-UMP-tyrosine modification.

The protein belongs to the P(II) protein family. As to quaternary structure, homotrimer.

Its function is as follows. In nitrogen-limiting conditions, when the ratio of Gln to 2-ketoglutarate decreases, P-II is uridylylated to P-II-UMP. P-II-UMP allows the deadenylation of glutamine synthetase (GS), thus activating the enzyme. Conversely, in nitrogen excess P-II is deuridylated and promotes the adenylation of GS. P-II indirectly controls the transcription of the GS gene (glnA). P-II prevents NR-II-catalyzed conversion of NR-I to NR-I-phosphate, the transcriptional activator of glnA. When P-II is uridylylated to P-II-UMP, these events are reversed. The protein is Nitrogen regulatory protein P-II (glnB) of Mesorhizobium japonicum (strain LMG 29417 / CECT 9101 / MAFF 303099) (Mesorhizobium loti (strain MAFF 303099)).